The chain runs to 1358 residues: DNA-directed RNA polymerase subunit beta (1358 aa).

This sequence belongs to the RNA polymerase beta chain family. The RNAP catalytic core consists of 2 alpha, 1 beta, 1 beta' and 1 omega subunit. When a sigma factor is associated with the core the holoenzyme is formed, which can initiate transcription.

It catalyses the reaction RNA(n) + a ribonucleoside 5'-triphosphate = RNA(n+1) + diphosphate. DNA-dependent RNA polymerase catalyzes the transcription of DNA into RNA using the four ribonucleoside triphosphates as substrates. The sequence is that of DNA-directed RNA polymerase subunit beta from Chromohalobacter salexigens (strain ATCC BAA-138 / DSM 3043 / CIP 106854 / NCIMB 13768 / 1H11).